Here is a 181-residue protein sequence, read N- to C-terminus: GMP synthase [glutamine-hydrolyzing] subunit A (181 aa).

Residues 2–181 enclose the Glutamine amidotransferase type-1 domain; the sequence is KILVVNNYGQ…FDNFLEICRR (180 aa). Cysteine 72 functions as the Nucleophile in the catalytic mechanism. Catalysis depends on residues histidine 159 and glutamate 161.

As to quaternary structure, heterodimer composed of a glutamine amidotransferase subunit (A) and a GMP-binding subunit (B).

It carries out the reaction XMP + L-glutamine + ATP + H2O = GMP + L-glutamate + AMP + diphosphate + 2 H(+). The protein operates within purine metabolism; GMP biosynthesis; GMP from XMP (L-Gln route): step 1/1. In terms of biological role, catalyzes the synthesis of GMP from XMP. This Methanothrix thermoacetophila (strain DSM 6194 / JCM 14653 / NBRC 101360 / PT) (Methanosaeta thermophila) protein is GMP synthase [glutamine-hydrolyzing] subunit A.